The sequence spans 154 residues: Ubiquitin-conjugating enzyme E2 L3 (154 aa).

The 148-residue stretch at 2–149 (AASRRLMKEL…AEEFTKKYGE (148 aa)) folds into the UBC core domain. Cys86 acts as the Glycyl thioester intermediate in catalysis. An N6-acetyllysine modification is found at Lys131.

This sequence belongs to the ubiquitin-conjugating enzyme family. As to quaternary structure, interacts with PRKN; involved in ubiquitination and degradation of misfolded proteins. Interacts with UBE3A. Interacts with CCNB1IP1, CBL, ZAP70, RNF19A, RNF19B and RNF144B. Interacts with ARIH1. Interacts with ARIH2 (via RING-type 1). Interacts with NCOA1; they functionally interact to regulate progesterone receptor transcriptional activity. Interacts with NDFIP1 (via N-terminus); the interaction mediates recruitment of UBE2L3 to ITCH and causes MAP3K7 ubiquitination. Post-translationally, ubiquitinated. The alteration of UBE2L3 protein levels during the S-phase of the cell cycle is due to ubiquitin-dependent proteasomal degradation. Autoubiquitinated in vitro.

It is found in the nucleus. Its subcellular location is the cytoplasm. It carries out the reaction S-ubiquitinyl-[E1 ubiquitin-activating enzyme]-L-cysteine + [E2 ubiquitin-conjugating enzyme]-L-cysteine = [E1 ubiquitin-activating enzyme]-L-cysteine + S-ubiquitinyl-[E2 ubiquitin-conjugating enzyme]-L-cysteine.. Its pathway is protein modification; protein ubiquitination. In terms of biological role, ubiquitin-conjugating enzyme E2 that specifically acts with HECT-type and RBR family E3 ubiquitin-protein ligases. Does not function with most RING-containing E3 ubiquitin-protein ligases because it lacks intrinsic E3-independent reactivity with lysine: in contrast, it has activity with the RBR family E3 enzymes, such as PRKN, RNF31 and ARIH1, that function like RING-HECT hybrids. Accepts ubiquitin from the E1 complex and catalyzes its covalent attachment to other proteins. Mediates ubiquitination by the CUL9-RBX1 complex. In vitro catalyzes 'Lys-11'-linked polyubiquitination. Involved in the selective degradation of short-lived and abnormal proteins. Down-regulated during the S-phase it is involved in progression through the cell cycle. Regulates nuclear hormone receptors transcriptional activity. May play a role in myelopoiesis. The sequence is that of Ubiquitin-conjugating enzyme E2 L3 (UBE2L3) from Pongo abelii (Sumatran orangutan).